Reading from the N-terminus, the 319-residue chain is Acetyl esterase (319 aa).

An Involved in the stabilization of the negatively charged intermediate by the formation of the oxyanion hole motif is present at residues 91–93; the sequence is HGG. Active-site residues include Ser-165, Asp-262, and His-292.

This sequence belongs to the 'GDXG' lipolytic enzyme family. Homodimer. Interacts with MalT and MelA.

It localises to the cytoplasm. Its function is as follows. Displays esterase activity towards short chain fatty esters (acyl chain length of up to 8 carbons). Able to hydrolyze triacetylglycerol (triacetin) and tributyrylglycerol (tributyrin), but not trioleylglycerol (triolein) or cholesterol oleate. Negatively regulates MalT activity by antagonizing maltotriose binding. Inhibits MelA galactosidase activity. This Escherichia coli O45:K1 (strain S88 / ExPEC) protein is Acetyl esterase.